The primary structure comprises 109 residues: Peptide chaperone MftB (109 aa).

The protein belongs to the peptide chaperone MftB family.

Its function is as follows. Peptide chaperone involved in the biosynthesis of the enzyme cofactor mycofactocin (MFT). Binds MftA and MftC with high affinity, and is essential for MftC activity on MftA, likely via the formation of a ternary complex. The sequence is that of Peptide chaperone MftB from Mycobacterium tuberculosis (strain ATCC 25618 / H37Rv).